A 354-amino-acid chain; its full sequence is Methylthioribose-1-phosphate isomerase (354 aa).

Asp246 (proton donor) is an active-site residue.

This sequence belongs to the eIF-2B alpha/beta/delta subunits family. MtnA subfamily.

It localises to the cytoplasm. Its subcellular location is the nucleus. It catalyses the reaction 5-(methylsulfanyl)-alpha-D-ribose 1-phosphate = 5-(methylsulfanyl)-D-ribulose 1-phosphate. It functions in the pathway amino-acid biosynthesis; L-methionine biosynthesis via salvage pathway; L-methionine from S-methyl-5-thio-alpha-D-ribose 1-phosphate: step 1/6. Its function is as follows. Catalyzes the interconversion of methylthioribose-1-phosphate (MTR-1-P) into methylthioribulose-1-phosphate (MTRu-1-P). This chain is Methylthioribose-1-phosphate isomerase (mri1), found in Xenopus tropicalis (Western clawed frog).